A 212-amino-acid polypeptide reads, in one-letter code: MKTLEKLFAEKLLKIKAIKLQPANPFTWASGWKSPFYCDNRKTLSYPSLRNFVKLEISRIVLEKFGQVDAIAGVATGAIPQGALVAEELNLPFVYVRSTPKDHGLENLIEGELRPGMKVVVIEDLISTGGSSLKAVEAIRRDGCEVIGMVAAFTYGFPVAIEAFKEAKVNLVTLTNYEAVLDSALKTGYINEEDVPVLDNWRKDPAHWEAGK.

5-phospho-alpha-D-ribose 1-diphosphate is bound by residues R97, K101, H103, and 123–131 (EDLISTGGS). S127 serves as a coordination point for orotate.

Belongs to the purine/pyrimidine phosphoribosyltransferase family. PyrE subfamily. Homodimer. Mg(2+) serves as cofactor.

The enzyme catalyses orotidine 5'-phosphate + diphosphate = orotate + 5-phospho-alpha-D-ribose 1-diphosphate. Its pathway is pyrimidine metabolism; UMP biosynthesis via de novo pathway; UMP from orotate: step 1/2. In terms of biological role, catalyzes the transfer of a ribosyl phosphate group from 5-phosphoribose 1-diphosphate to orotate, leading to the formation of orotidine monophosphate (OMP). This is Orotate phosphoribosyltransferase from Phocaeicola vulgatus (strain ATCC 8482 / DSM 1447 / JCM 5826 / CCUG 4940 / NBRC 14291 / NCTC 11154) (Bacteroides vulgatus).